Here is a 60-residue protein sequence, read N- to C-terminus: Large ribosomal subunit protein uL30 (60 aa).

This sequence belongs to the universal ribosomal protein uL30 family. In terms of assembly, part of the 50S ribosomal subunit.

The chain is Large ribosomal subunit protein uL30 from Bacillus pumilus (strain SAFR-032).